We begin with the raw amino-acid sequence, 232 residues long: MKVLAIKLVDYREWTERLGYDREWLIQKIQNKFMMKIHEIASQYSTFPLQLRFDNFLMIVDGITNTQLIYMINDMQENLPVGIKTCLGYGKTPLEAQWNASVCLNNKEDKFKEYVDEKIAALHFDINFNTEALKYTSVYDSFLEITNIYVDLSRFLYKIGGILQYLGGDNYLGFVSTNSVNKVIEKFSDDNKIKVGIGIGQNARTAIKLATTSLEKIRNNREKTWHIEEEYH.

The protein belongs to the archaeal-type GTP cyclohydrolase family.

The catalysed reaction is GTP + 3 H2O = 2-amino-5-formylamino-6-(5-phospho-D-ribosylamino)pyrimidin-4(3H)-one + 2 phosphate + 2 H(+). In terms of biological role, catalyzes the formation of 2-amino-5-formylamino-6-ribofuranosylamino-4(3H)-pyrimidinone ribonucleotide monophosphate and inorganic phosphate from GTP. Also has an independent pyrophosphate phosphohydrolase activity. In Saccharolobus islandicus (strain Y.N.15.51 / Yellowstone #2) (Sulfolobus islandicus), this protein is GTP cyclohydrolase III.